Reading from the N-terminus, the 401-residue chain is MAKQKFERTKPHVNVGTIGHVDHGKTTLTAAITKVLALQGAAQFVSYDQIDNAPEERARGITIAIRHVEYQTAKRHYAHVDCPGHADYIKNMITGAAQMDGAILVVSAPDGPMPQTREHVLLARQVQVPAMVVFLNKVDMMDDEELLELVELELRELLSNHGFPGDEIPIIRGSALAALSSASTDINAPEYQCILDLMNAVDEYIPTPVREVDKPFLMPIEDVFGIKGRGTVVTGRIERGKVKMGDTVEIVGMSHEAPKKTVVTGVEMFQKTLDEGIAGDNVGVLLRGIERTEVERGQVLAAPGSIKPHAKFKANVYVLKKEEGGRHTPFFPGYRPQFYIRTTDVTGAISLPAGVEMVMPGDNIEMLVELIVPVAIEEGLRFAIREGGRTVGAGVVSAIVD.

The tr-type G domain occupies 10-209 (KPHVNVGTIG…AVDEYIPTPV (200 aa)). A G1 region spans residues 19–26 (GHVDHGKT). 19–26 (GHVDHGKT) contacts GTP. T26 contacts Mg(2+). The tract at residues 60-64 (GITIA) is G2. Positions 81–84 (DCPG) are G3. Residues 81–85 (DCPGH) and 136–139 (NKVD) contribute to the GTP site. The segment at 136 to 139 (NKVD) is G4. The G5 stretch occupies residues 174–176 (SAL).

Belongs to the TRAFAC class translation factor GTPase superfamily. Classic translation factor GTPase family. EF-Tu/EF-1A subfamily. In terms of assembly, monomer.

It localises to the cytoplasm. It carries out the reaction GTP + H2O = GDP + phosphate + H(+). Functionally, GTP hydrolase that promotes the GTP-dependent binding of aminoacyl-tRNA to the A-site of ribosomes during protein biosynthesis. This is Elongation factor Tu 2 from Roseiflexus castenholzii (strain DSM 13941 / HLO8).